Here is a 475-residue protein sequence, read N- to C-terminus: Bifunctional protein HldE (475 aa).

A ribokinase region spans residues 1-318 (MKITLPEFGK…ANALYTEQET (318 aa)). Residue 195-198 (NMSE) participates in ATP binding. The active site involves Asp264. Positions 344 to 475 (MTNGCFDILH…DIIKTIRERG (132 aa)) are cytidylyltransferase.

This sequence in the N-terminal section; belongs to the carbohydrate kinase PfkB family. The protein in the C-terminal section; belongs to the cytidylyltransferase family. As to quaternary structure, homodimer.

The enzyme catalyses D-glycero-beta-D-manno-heptose 7-phosphate + ATP = D-glycero-beta-D-manno-heptose 1,7-bisphosphate + ADP + H(+). The catalysed reaction is D-glycero-beta-D-manno-heptose 1-phosphate + ATP + H(+) = ADP-D-glycero-beta-D-manno-heptose + diphosphate. Its pathway is nucleotide-sugar biosynthesis; ADP-L-glycero-beta-D-manno-heptose biosynthesis; ADP-L-glycero-beta-D-manno-heptose from D-glycero-beta-D-manno-heptose 7-phosphate: step 1/4. It participates in nucleotide-sugar biosynthesis; ADP-L-glycero-beta-D-manno-heptose biosynthesis; ADP-L-glycero-beta-D-manno-heptose from D-glycero-beta-D-manno-heptose 7-phosphate: step 3/4. Functionally, catalyzes the phosphorylation of D-glycero-D-manno-heptose 7-phosphate at the C-1 position to selectively form D-glycero-beta-D-manno-heptose-1,7-bisphosphate. Catalyzes the ADP transfer from ATP to D-glycero-beta-D-manno-heptose 1-phosphate, yielding ADP-D-glycero-beta-D-manno-heptose. This is Bifunctional protein HldE from Aeromonas salmonicida (strain A449).